Here is a 914-residue protein sequence, read N- to C-terminus: TRPM8 channel-associated factor 2 (914 aa).

The region spanning 541–840 (DAWMSTGLNL…TYLQLQEAFG (300 aa)) is the Peptidase M60 domain.

It belongs to the TCAF family. As to quaternary structure, interacts with TRPM8 (via N-terminus and C-terminus domains); the interaction inhibits TRPM8 channel activity. Interacts with TRPV6.

The protein resides in the cell membrane. In terms of biological role, negatively regulates the plasma membrane cation channel TRPM8 activity. Involved in the recruitment of TRPM8 to the cell surface. Promotes prostate cancer cell migration stimulation in a TRPM8-dependent manner. This is TRPM8 channel-associated factor 2 from Bos taurus (Bovine).